A 288-amino-acid chain; its full sequence is Prohibitin-1, mitochondrial (288 aa).

At 1–10 (MNNVKVPKIP) the chain is on the mitochondrial matrix side. A helical; Signal-anchor for type II membrane protein membrane pass occupies residues 11-30 (GGGAISTLLKVGIIGGLGLY). The Mitochondrial intermembrane segment spans residues 31–288 (GATHSLYNVE…GMNLDVDAKN (258 aa)). Residues 186 to 219 (KEFTAAIEAKQVAAQEAERAKFIVEKAEQDKRSA) adopt a coiled-coil conformation.

The protein belongs to the prohibitin family. As to quaternary structure, component of a prohibitin multimeric complex in mitochondrial membranes. In terms of tissue distribution, mostly expressed in proliferative tissues, including vasculature, shoot and root apical tissues.

It is found in the mitochondrion inner membrane. Its function is as follows. Prohibitin probably acts as a holdase/unfoldase for the stabilization of newly synthesized mitochondrial proteins. This Arabidopsis thaliana (Mouse-ear cress) protein is Prohibitin-1, mitochondrial (PHB1).